The primary structure comprises 263 residues: Endonuclease 8 (263 aa).

The Schiff-base intermediate with DNA role is filled by P2. The active-site Proton donor is the E3. K53 serves as the catalytic Proton donor; for beta-elimination activity. Positions 70, 125, and 169 each coordinate DNA. The FPG-type zinc-finger motif lies at K229–R263. The active-site Proton donor; for delta-elimination activity is R253.

It belongs to the FPG family. Zn(2+) is required as a cofactor.

The enzyme catalyses 2'-deoxyribonucleotide-(2'-deoxyribose 5'-phosphate)-2'-deoxyribonucleotide-DNA = a 3'-end 2'-deoxyribonucleotide-(2,3-dehydro-2,3-deoxyribose 5'-phosphate)-DNA + a 5'-end 5'-phospho-2'-deoxyribonucleoside-DNA + H(+). In terms of biological role, involved in base excision repair of DNA damaged by oxidation or by mutagenic agents. Acts as a DNA glycosylase that recognizes and removes damaged bases. Has a preference for oxidized pyrimidines, such as thymine glycol, 5,6-dihydrouracil and 5,6-dihydrothymine. Has AP (apurinic/apyrimidinic) lyase activity and introduces nicks in the DNA strand. Cleaves the DNA backbone by beta-delta elimination to generate a single-strand break at the site of the removed base with both 3'- and 5'-phosphates. The protein is Endonuclease 8 of Pectobacterium carotovorum subsp. carotovorum (strain PC1).